Consider the following 332-residue polypeptide: MATRAVARRQPAASGETGAAGSVRATGEIADRDLVGMYLDEIARTPLLDAAKEVELSQTIEAGVYAGKILDGEVDSDSAGASREELEALVAEGERAKDVFIRSNLRLVVAVARRYPRSGLPLLDLIQEGNAGLVRAVEKFDYAKGFKFSTYATWWIRQAITRSIADQSRTIRLPVHLVEELGRIRRVQREFNRENGRDPEPAEIAAELSSTPERVTDVLDWARDPVSLNMSVDDEGETQFGDLLEDTSAVSPEQSVLTLLRSEELDDLIGQLDDRTASIIKMRYGIEDGRERTLTEVGKQHGLTRERIRQIEKHALLELKRMAHDTGFDAAA.

A disordered region spans residues 1 to 21; that stretch reads MATRAVARRQPAASGETGAAG. Positions 124 to 137 match the Polymerase core binding motif; that stretch reads DLIQEGNAGLVRAV. The segment at residues 294–313 is a DNA-binding region (H-T-H motif); the sequence is LTEVGKQHGLTRERIRQIEK.

This sequence belongs to the sigma-70 factor family.

In terms of biological role, sigma factors are initiation factors that promote the attachment of RNA polymerase to specific initiation sites and are then released. This chain is RNA polymerase principal sigma factor HrdD (hrdD), found in Streptomyces griseus.